We begin with the raw amino-acid sequence, 775 residues long: Outer capsid protein VP4 (775 aa).

The interval 65 to 223 (LDGPYQPTSF…KCVEYINTGL (159 aa)) is spike head. The tract at residues 247–478 (AQVSEDIIIS…LISLVPSNDD (232 aa)) is spike body and stalk (antigen domain). Residues 307–309 (DGE) carry the DGE motif; interaction with ITGA2/ITGB1 heterodimer motif. Cysteines 317 and 379 form a disulfide. The hydrophobic; possible role in virus entry into host cell stretch occupies residues 388-408 (MPVGAWPVMSGGAVSLHFAGV). A YGL motif; interaction with ITGA4 motif is present at residues 447 to 449 (YGL). Residues 483 to 510 (IMNSITVRQDLERQLGDLREEFNSLSQE) adopt a coiled-coil conformation. The spike foot stretch occupies residues 509–775 (QEIAITQLID…IEQLILQCRL (267 aa)). The KID motif; interaction with HSPA8 signature appears at 643-645 (KID).

It belongs to the rotavirus VP4 family. As to quaternary structure, homotrimer. VP4 adopts a dimeric appearance above the capsid surface, while forming a trimeric base anchored inside the capsid layer. Only hints of the third molecule are observed above the capsid surface. It probably performs a series of molecular rearrangements during viral entry. Prior to trypsin cleavage, it is flexible. The priming trypsin cleavage triggers its rearrangement into rigid spikes with approximate two-fold symmetry of their protruding parts. After an unknown second triggering event, cleaved VP4 may undergo another rearrangement, in which two VP5* subunits fold back on themselves and join a third subunit to form a tightly associated trimer, shaped like a folded umbrella. Interacts with VP6. Interacts with VP7. Homotrimer. The trimer is coiled-coil stabilized by its C-terminus, however, its N-terminus, known as antigen domain or 'body', seems to be flexible allowing it to self-associate either as a dimer or a trimer. In terms of processing, proteolytic cleavage by trypsin results in activation of VP4 functions and greatly increases infectivity. The penetration into the host cell is dependent on trypsin treatment of VP4. It produces two peptides, VP5* and VP8* that remain associated with the virion. Cleavage of VP4 by trypsin probably occurs in vivo in the lumen of the intestine prior to infection of enterocytes. Trypsin seems to be incorporated into the three-layered viral particles but remains inactive as long as the viral outer capsid is intact and would only be activated upon the solubilization of the latter.

Its subcellular location is the virion. The protein resides in the host rough endoplasmic reticulum. It localises to the host cell membrane. It is found in the host cytoplasm. The protein localises to the host cytoskeleton. Its subcellular location is the host endoplasmic reticulum-Golgi intermediate compartment. In terms of biological role, spike-forming protein that mediates virion attachment to the host epithelial cell receptors and plays a major role in cell penetration, determination of host range restriction and virulence. Rotavirus attachment and entry into the host cell probably involves multiple sequential contacts between the outer capsid proteins VP4 and VP7, and the cell receptors. It is subsequently lost, together with VP7, following virus entry into the host cell. Following entry into the host cell, low intracellular or intravesicular Ca(2+) concentration probably causes the calcium-stabilized VP7 trimers to dissociate from the virion. This step is probably necessary for the membrane-disrupting entry step and the release of VP4, which is locked onto the virion by VP7. During the virus exit from the host cell, VP4 seems to be required to target the newly formed virions to the host cell lipid rafts. Forms the spike 'foot' and 'body' and acts as a membrane permeabilization protein that mediates release of viral particles from endosomal compartments into the cytoplasm. During entry, the part of VP5* that protrudes from the virus folds back on itself and reorganizes from a local dimer to a trimer. This reorganization may be linked to membrane penetration by exposing VP5* hydrophobic region. In integrin-dependent strains, VP5* targets the integrin heterodimer ITGA2/ITGB1 for cell attachment. Functionally, forms the head of the spikes and mediates the recognition of specific host cell surface glycans. It is the viral hemagglutinin and an important target of neutralizing antibodies. In sialic acid-dependent strains, VP8* binds to host cell sialic acid, most probably a ganglioside, providing the initial contact. In some other strains, VP8* mediates the attachment to histo-blood group antigens (HBGAs) for viral entry. The protein is Outer capsid protein VP4 of Homo sapiens (Human).